We begin with the raw amino-acid sequence, 295 residues long: 3-methyl-2-oxobutanoate hydroxymethyltransferase (295 aa).

The segment at 1-30 is disordered; it reads MTSGRAMSPEETAPYGTGPARAESAPDAPA. Residues aspartate 76 and aspartate 115 each coordinate Mg(2+). Residues 76-77, aspartate 115, and lysine 145 contribute to the 3-methyl-2-oxobutanoate site; that span reads DS. Residue glutamate 147 participates in Mg(2+) binding. Glutamate 213 functions as the Proton acceptor in the catalytic mechanism.

It belongs to the PanB family. Homodecamer; pentamer of dimers. The cofactor is Mg(2+).

Its subcellular location is the cytoplasm. It catalyses the reaction 3-methyl-2-oxobutanoate + (6R)-5,10-methylene-5,6,7,8-tetrahydrofolate + H2O = 2-dehydropantoate + (6S)-5,6,7,8-tetrahydrofolate. It participates in cofactor biosynthesis; (R)-pantothenate biosynthesis; (R)-pantoate from 3-methyl-2-oxobutanoate: step 1/2. Its function is as follows. Catalyzes the reversible reaction in which hydroxymethyl group from 5,10-methylenetetrahydrofolate is transferred onto alpha-ketoisovalerate to form ketopantoate. The polypeptide is 3-methyl-2-oxobutanoate hydroxymethyltransferase (Nocardioides sp. (strain ATCC BAA-499 / JS614)).